A 626-amino-acid chain; its full sequence is Interferon-induced GTP-binding protein MxC (626 aa).

Residues 40-313 (DLNLPAIAVI…LVEHIAKNVP (274 aa)) enclose the Dynamin-type G domain. The G1 motif stretch occupies residues 50–57 (GDQSSGKS). Residue 50 to 57 (GDQSSGKS) participates in GTP binding. Positions 75–77 (VTR) are G2 motif. Positions 151 to 154 (DLPG) are G3 motif. GTP-binding positions include 151 to 155 (DLPGI) and 220 to 223 (TKPD). The interval 220–223 (TKPD) is G4 motif. Residues 252 to 255 (KCRG) form a G5 motif region. A GED domain is found at 534-624 (LRETAFHLTS…ALPKVVHSAN (91 aa)).

The protein belongs to the TRAFAC class dynamin-like GTPase superfamily. Dynamin/Fzo/YdjA family.

It localises to the cytoplasm. The chain is Interferon-induced GTP-binding protein MxC (mxc) from Danio rerio (Zebrafish).